Consider the following 300-residue polypeptide: Solute carrier family 25 member 35 (300 aa).

Solcar repeat units lie at residues 1–90 (MDFL…AEAG), 100–193 (HSPA…TKDL), and 203–294 (QSWK…LRSL). A run of 6 helical transmembrane segments spans residues 38–58 (TYQR…KVDG), 59–79 (LAAL…MNGI), 91–119 (GYLH…GAYL), 169–190 (ALGG…FSST), 205–225 (WKLA…AMAP), and 277–300 (LGPH…TDTK).

The protein belongs to the mitochondrial carrier (TC 2.A.29) family.

It localises to the mitochondrion inner membrane. It carries out the reaction a dicarboxylate(in) + sulfate(out) = a dicarboxylate(out) + sulfate(in). Putative antiporter that exchanges dicarboxylates and sulfur oxoanions across the inner membrane of mitochondria. The chain is Solute carrier family 25 member 35 (SLC25A35) from Homo sapiens (Human).